The primary structure comprises 364 residues: Adenosine 3'-phospho 5'-phosphosulfate transporter 2 (364 aa).

A run of 10 helical transmembrane segments spans residues 39 to 59 (WLQFVLLSLAIFILYIGYGYM), 74 to 94 (WTLTLIQFLIYSGCGYTECII), 106 to 126 (IYGVIAFFTVATMGLSNASVG), 131 to 151 (PTQVIFKCCKLIPVLIGGILI), 157 to 177 (GWIDIGAAMLMSLGIIMFTLA), 187 to 206 (SRGYIMICGALLADAVIGNI), 231 to 251 (VFIFAFVVLSGEVFSAIPFFL), 257 to 277 (TFGYALILSCLGYLGVNVVLT), 281 to 301 (VFGALVAVTVTTLRKALTIIL), and 310 to 330 (FTIEYVYAGSVVMLAIYLNLY).

It belongs to the nucleotide-sugar transporter family. SLC35B subfamily.

The protein localises to the golgi apparatus membrane. Mediates the transport of adenosine 3'-phospho 5'-phosphosulfate (PAPS), from cytosol into Golgi. PAPS is a universal sulfuryl donor for sulfation events that take place in the Golgi. The chain is Adenosine 3'-phospho 5'-phosphosulfate transporter 2 (pst-2) from Caenorhabditis elegans.